The following is an 856-amino-acid chain: Alanine/arginine aminopeptidase (856 aa).

Residues E132 and 264–268 each bind substrate; that span reads GAMEN. A Zn(2+)-binding site is contributed by H300. Catalysis depends on E301, which acts as the Proton acceptor. The Zn(2+) site is built by H304 and E323.

Belongs to the peptidase M1 family. It depends on Zn(2+) as a cofactor.

Its function is as follows. Positive effector of glycogen accumulation. May be involved in nutrient-sensing. The protein is Alanine/arginine aminopeptidase (AAP1) of Saccharomyces cerevisiae (strain ATCC 204508 / S288c) (Baker's yeast).